Reading from the N-terminus, the 73-residue chain is Small proline-rich protein 2G (73 aa).

Residues 1–11 (MSYQQQQCKQP) are compositionally biased toward low complexity. Residues 1–20 (MSYQQQQCKQPCQPPPVCPT) form a disordered region. 3 consecutive repeat copies span residues 21-29 (PKCPEPCPP), 30-38 (PKCPEPYLP), and 39-47 (PPCPPEHCP). The 3 X 9 AA approximate tandem repeats stretch occupies residues 21–47 (PKCPEPCPPPKCPEPYLPPPCPPEHCP).

The protein belongs to the cornifin (SPRR) family.

The protein localises to the cytoplasm. Its function is as follows. Cross-linked envelope protein of keratinocytes. It is a keratinocyte protein that first appears in the cell cytosol, but ultimately becomes cross-linked to membrane proteins by transglutaminase. All that results in the formation of an insoluble envelope beneath the plasma membrane. The polypeptide is Small proline-rich protein 2G (SPRR2G) (Homo sapiens (Human)).